The primary structure comprises 446 residues: Histidine--tRNA ligase (446 aa).

Belongs to the class-II aminoacyl-tRNA synthetase family. As to quaternary structure, homodimer.

It localises to the cytoplasm. The catalysed reaction is tRNA(His) + L-histidine + ATP = L-histidyl-tRNA(His) + AMP + diphosphate + H(+). This is Histidine--tRNA ligase from Paraburkholderia phytofirmans (strain DSM 17436 / LMG 22146 / PsJN) (Burkholderia phytofirmans).